The following is a 751-amino-acid chain: Adhesive plaque matrix protein (751 aa).

The first 20 residues, 1 to 20, serve as a signal peptide directing secretion; that stretch reads MEGIKLNLCLLCIFTCDILG. Positions 21-41 are nonrepetitive linker; it reads FSNGNIYNAHGSAYAGASAGA. A run of 55 repeats spans residues 109–118, 119–128, 129–138, 139–148, 149–158, 159–168, 169–178, 179–188, 189–198, 199–208, 209–218, 219–228, 229–238, 239–248, 249–258, 259–268, 269–278, 279–288, 289–298, 299–308, 309–318, 319–328, 329–338, 339–348, 349–358, 359–368, 369–378, 379–388, 389–398, 399–408, 409–418, 419–428, 429–438, 439–448, 449–458, 459–468, 469–478, 479–488, 489–498, 499–508, 509–518, 519–528, 529–538, 539–548, 549–558, 559–568, 569–578, 579–588, 589–598, 599–608, 609–618, 619–628, 629–638, 639–648, and 649–658. Residues 109 to 732 form a 63 X 10 AA tandem repeats of Y-[KR]-[APTS]-K-[KPMSLTIVA]-[STR]-Y-[PLS]-[PASRQT]-[STI] region; that stretch reads YKPKMTYPPT…YKPKPSYPPT (624 aa). Residues 158-167 show a composition bias toward low complexity; that stretch reads TYKPKLTYPP. Positions 158 to 359 are disordered; that stretch reads TYKPKLTYPP…KPKTTYPPSY (202 aa). The span at 168-184 shows a compositional bias: pro residues; that stretch reads TYKPKPSYPPTYKPKPS. The span at 185-262 shows a compositional bias: low complexity; the sequence is YPATYKSKSS…KTYPSTYKPK (78 aa). 2 stretches are compositionally biased toward low complexity: residues 288-343 and 350-359; these read TYKA…KAKP and KPKTTYPPSY. Positions 397-636 are disordered; it reads PTYKAKPSYP…PTYKAKPSYP (240 aa). Positions 444–486 are enriched in low complexity; it reads SYPPTYKAKPSYPPTYKAKPSYPPTYKAKPSYPPTYKTKPSYP. One copy of the 56; truncated repeat lies at 659–662; it reads YPST. The interval 660–751 is disordered; it reads PSTYKAKPSY…KKKISYPSQY (92 aa). The span at 662-677 shows a compositional bias: low complexity; the sequence is TYKAKPSYPPTYKAKP. 7 consecutive repeat copies span residues 663-672, 673-682, 683-692, 693-702, 703-712, 713-722, and 723-732. The span at 678–690 shows a compositional bias: pro residues; that stretch reads SYPPTYKPKPSYP. Residues 691–721 are compositionally biased toward low complexity; it reads PTYKSKSSYPSSYKPKKTYPPTYKPKLTYPP.

Post-translationally, hydroxylated on proline (mono- or dihydroxylation) and tyrosine residues (to L-DOPA = 3',4'-dihydroxyphenylalanine) of the tandem repeats. In terms of tissue distribution, produced by the byssal gland.

The protein resides in the secreted. Its function is as follows. Provides adhesiveness to the mussel's foot. Mussels produce one of the strongest water insoluble glues. The mussel's adhesive is a bundle of threads, called a byssus, formed by a fibrous collagenous core coated with adhesive proteins. In Mytilus galloprovincialis (Mediterranean mussel), this protein is Adhesive plaque matrix protein (FP1).